A 424-amino-acid polypeptide reads, in one-letter code: MASSNLIKQLQERGLVAQVTDEEALAERLAQGPIALYCGFDPTADSLHLGHLVPLLCLKRFQLAGHKPVALVGGATGLIGDPSFKAAERKLNTTETVNEWVDKIRKQVSPFLDFDCGSNSAIAANNYDWFGGMNVLTFLRDIGKHFSVNQMINKEAVKQRLNRDDSGISFTEFSYNLLQGFDFSELYNRHQVELQIGGSDQWGNITSGIDLTRRMHQQQVFGLTVPLITKADGTKFGKTEGGAVWLAPEKTSPYKFYQFWINTADADVYRFLKFFTFMDLAEINALEEEDKNSGKAPRAQYVLAEEVTGMVHGAEGLAAAKRITQSLFSGALHEMTEADFAQLAQDGMPTIKLDGDADLQQALVNAELVPSRGQARTMIGSNAVTINGEKQSNAEYNFSDADRLFGRYTLLRRGKKHYCLVDWQ.

Tyr37 lines the L-tyrosine pocket. The short motif at Pro42 to His51 is the 'HIGH' region element. Residues Tyr175 and Gln179 each contribute to the L-tyrosine site. A 'KMSKS' region motif is present at residues Lys235–Thr239. Position 238 (Lys238) interacts with ATP. The 58-residue stretch at Ala357–Gly414 folds into the S4 RNA-binding domain.

It belongs to the class-I aminoacyl-tRNA synthetase family. TyrS type 1 subfamily. In terms of assembly, homodimer.

It is found in the cytoplasm. It carries out the reaction tRNA(Tyr) + L-tyrosine + ATP = L-tyrosyl-tRNA(Tyr) + AMP + diphosphate + H(+). Catalyzes the attachment of tyrosine to tRNA(Tyr) in a two-step reaction: tyrosine is first activated by ATP to form Tyr-AMP and then transferred to the acceptor end of tRNA(Tyr). The polypeptide is Tyrosine--tRNA ligase (Serratia proteamaculans (strain 568)).